We begin with the raw amino-acid sequence, 326 residues long: Beta-1,3-galactosyltransferase 1 (326 aa).

Residues 1-6 (MASKVS) are Cytoplasmic-facing. A helical; Signal-anchor for type II membrane protein membrane pass occupies residues 7–26 (CLYVLTVVCWASALWYLSIT). At 27 to 326 (RPTSSYTGSK…DMSSKKHLRC (300 aa)) the chain is on the lumenal side. Residues Asn-47 and Asn-151 are each glycosylated (N-linked (GlcNAc...) asparagine).

Belongs to the glycosyltransferase 31 family. It depends on Mn(2+) as a cofactor.

It is found in the golgi apparatus membrane. It carries out the reaction an N-acetyl-beta-D-glucosaminyl derivative + UDP-alpha-D-galactose = a beta-D-galactosyl-(1-&gt;3)-N-acetyl-beta-D-glucosaminyl derivative + UDP + H(+). The catalysed reaction is a beta-D-GlcNAc-(1-&gt;3)-beta-D-Gal-(1-&gt;4)-beta-D-Glc-(1&lt;-&gt;1)-Cer(d18:1(4E)) + UDP-alpha-D-galactose = a beta-D-Gal-(1-&gt;3)-beta-D-GlcNAc-(1-&gt;3)-beta-D-Gal-(1-&gt;4)-beta-D-Glc-(1&lt;-&gt;1')-Cer(d18:1(4E)) + UDP + H(+). It functions in the pathway protein modification; protein glycosylation. Its function is as follows. Beta-1,3-galactosyltransferase that transfers galactose from UDP-galactose to substrates with a terminal beta-N-acetylglucosamine (beta-GlcNAc) residue. Involved in the biosynthesis of the carbohydrate moieties of glycolipids and glycoproteins. The protein is Beta-1,3-galactosyltransferase 1 (B3GALT1) of Gorilla gorilla gorilla (Western lowland gorilla).